We begin with the raw amino-acid sequence, 275 residues long: Large ribosomal subunit protein uL2 (275 aa).

Residues 35–49 are compositionally biased toward polar residues; the sequence is DSQSSTAGRNNNGRI. Disordered regions lie at residues 35–59 and 224–275; these read DSQS…GGHK and AMNP…RHKR. The segment covering 50–59 has biased composition (basic residues); sequence TTRHKGGGHK.

The protein belongs to the universal ribosomal protein uL2 family. In terms of assembly, part of the 50S ribosomal subunit. Forms a bridge to the 30S subunit in the 70S ribosome.

One of the primary rRNA binding proteins. Required for association of the 30S and 50S subunits to form the 70S ribosome, for tRNA binding and peptide bond formation. It has been suggested to have peptidyltransferase activity; this is somewhat controversial. Makes several contacts with the 16S rRNA in the 70S ribosome. In Burkholderia orbicola (strain AU 1054), this protein is Large ribosomal subunit protein uL2.